Reading from the N-terminus, the 171-residue chain is MGWLSSIFWAFWYILPAYFANASPVLVGGGRPIDGGRVWRDGRRLLGDGKTWRGFIGGVLIGTLVGIVQYFITPDFYGSLETAVKLAFLLSFGALIGDLVGSFIKRRANLPRGYPAIGLDQLGFLISALAFAYPVKTLSSGQIIFLLVVSPFIHWGANYFAYRMGWKSVPW.

5 helical membrane passes run 7–27 (IFWAFWYILPAYFANASPVLV), 54–74 (GFIGGVLIGTLVGIVQYFITP), 84–104 (VKLAFLLSFGALIGDLVGSFI), 115–135 (PAIGLDQLGFLISALAFAYPV), and 141–161 (GQIIFLLVVSPFIHWGANYFA).

Belongs to the CDP-archaeol synthase family. It depends on Mg(2+) as a cofactor.

The protein resides in the cell membrane. It catalyses the reaction 2,3-bis-O-(geranylgeranyl)-sn-glycerol 1-phosphate + CTP + H(+) = CDP-2,3-bis-O-(geranylgeranyl)-sn-glycerol + diphosphate. The protein operates within membrane lipid metabolism; glycerophospholipid metabolism. In terms of biological role, catalyzes the formation of CDP-2,3-bis-(O-geranylgeranyl)-sn-glycerol (CDP-archaeol) from 2,3-bis-(O-geranylgeranyl)-sn-glycerol 1-phosphate (DGGGP) and CTP. This reaction is the third ether-bond-formation step in the biosynthesis of archaeal membrane lipids. The polypeptide is CDP-archaeol synthase (Thermococcus kodakarensis (strain ATCC BAA-918 / JCM 12380 / KOD1) (Pyrococcus kodakaraensis (strain KOD1))).